The primary structure comprises 155 residues: MSRRSIIEKKTIKSDPIYRNRLVNMMVNRILKNGKKSLAYRIFYKAMKNIKQKTKKNPLSILRQAIHRVTPNVTIKARRVGGSTYQVPVEIKSAQGKALAICWLLRASKKRLGRNMAFKLSYELIDAARDSGEAIRKKEETHRMAEANRAFAHFR.

Belongs to the universal ribosomal protein uS7 family. As to quaternary structure, part of the 30S ribosomal subunit.

The protein resides in the plastid. It is found in the chloroplast. In terms of biological role, one of the primary rRNA binding proteins, it binds directly to 16S rRNA where it nucleates assembly of the head domain of the 30S subunit. The polypeptide is Small ribosomal subunit protein uS7c (rps7) (Physcomitrium patens (Spreading-leaved earth moss)).